Reading from the N-terminus, the 90-residue chain is Probable Fe(2+)-trafficking protein (90 aa).

Belongs to the Fe(2+)-trafficking protein family.

Could be a mediator in iron transactions between iron acquisition and iron-requiring processes, such as synthesis and/or repair of Fe-S clusters in biosynthetic enzymes. The sequence is that of Probable Fe(2+)-trafficking protein from Acidovorax ebreus (strain TPSY) (Diaphorobacter sp. (strain TPSY)).